We begin with the raw amino-acid sequence, 130 residues long: Small ribosomal subunit protein uS11 (130 aa).

The protein belongs to the universal ribosomal protein uS11 family. In terms of assembly, part of the 30S ribosomal subunit. Interacts with proteins S7 and S18. Binds to IF-3.

In terms of biological role, located on the platform of the 30S subunit, it bridges several disparate RNA helices of the 16S rRNA. Forms part of the Shine-Dalgarno cleft in the 70S ribosome. The sequence is that of Small ribosomal subunit protein uS11 from Xanthomonas campestris pv. campestris (strain B100).